Reading from the N-terminus, the 322-residue chain is Arginase-1 (322 aa).

The disordered stretch occupies residues 1 to 27 (MSSKPQSIGVIGAPFSKGQPRGGVEEG). S7 carries the phosphoserine modification. K17 is modified (N6-succinyllysine). S62 is subject to Phosphoserine. The residue at position 75 (K75) is an N6-succinyllysine. Mn(2+)-binding residues include H101, D124, H126, and D128. Substrate is bound by residues 126–130 (HTDIN), 137–139 (TGN), and D183. S217 is modified (phosphoserine). 2 residues coordinate Mn(2+): D232 and D234. Positions 246 and 277 each coordinate substrate.

This sequence belongs to the arginase family. Homotrimer. Interacts with CMTM6. Mn(2+) is required as a cofactor.

The protein resides in the cytoplasm. It catalyses the reaction L-arginine + H2O = urea + L-ornithine. It participates in nitrogen metabolism; urea cycle; L-ornithine and urea from L-arginine: step 1/1. In Bos taurus (Bovine), this protein is Arginase-1 (ARG1).